Consider the following 300-residue polypeptide: Soluble inorganic pyrophosphatase 6, chloroplastic (300 aa).

Residues 1 to 66 (MAATRVLTAA…CSAIYNPQVK (66 aa)) constitute a chloroplast transit peptide. Position 140 (Arg-140) interacts with diphosphate. Residue Tyr-142 is the Proton donor of the active site. Mg(2+)-binding residues include Asp-173, Asp-178, and Asp-210.

The protein belongs to the PPase family. Mg(2+) serves as cofactor. In terms of tissue distribution, expressed in all tissues tested. Highest expression in flowers, leaves and roots. Lower levels of expression in siliques, stems, ovary, stigma and pollen.

The protein localises to the plastid. It localises to the chloroplast stroma. It carries out the reaction diphosphate + H2O = 2 phosphate + H(+). Its activity is regulated as follows. Inhibited by NaF. The protein is Soluble inorganic pyrophosphatase 6, chloroplastic of Arabidopsis thaliana (Mouse-ear cress).